The following is a 1174-amino-acid chain: ATP-dependent DNA helicase SRS2 (1174 aa).

The 303-residue stretch at 14 to 316 (QLNTQQRAAA…IILVENYRSS (303 aa)) folds into the UvrD-like helicase ATP-binding domain. 38-43 (GTGKTK) provides a ligand contact to ATP. Residues 222–243 (LLMYTFRLLTRVRVLSNIKHVL) are leucine-zipper. R314 serves as a coordination point for ATP. Residues 317-654 (QKILNTSEIL…TISTIHGAKG (338 aa)) form the UvrD-like helicase C-terminal domain. Residues 676-704 (DDKKDESEEDEEEDQENSKKDASPKKTRV) are disordered. A Phosphoserine modification is found at S833. 3 disordered regions span residues 865–896 (SKINGNYAPKSRVKSPEKRYAPETTSFHSPTK), 909–973 (NVPS…DKVT), and 994–1024 (ELHPPEYSNKSGQSLTSSEFSGFSSACSNSD). Polar residues-rich tracts occupy residues 909–922 (NVPSRQEFHSSTGK) and 935–955 (TDISPRSSTRSLKGASPNKTS). Positions 956-973 (HMSDDLMRPSPTRKDKVT) are enriched in basic and acidic residues. The span at 1007-1023 (SLTSSEFSGFSSACSNS) shows a compositional bias: low complexity.

It belongs to the helicase family. UvrD subfamily.

It is found in the nucleus. The catalysed reaction is Couples ATP hydrolysis with the unwinding of duplex DNA by translocating in the 3'-5' direction.. It carries out the reaction ATP + H2O = ADP + phosphate + H(+). Functionally, ATP-dependent DNA helicase involved in DNA repair at least for UV-induced lesions. The polarity of the helicase activity was determined to be 3' to 5'. The polypeptide is ATP-dependent DNA helicase SRS2 (SRS2) (Saccharomyces cerevisiae (strain ATCC 204508 / S288c) (Baker's yeast)).